Reading from the N-terminus, the 215-residue chain is Phosphatidylserine decarboxylase proenzyme (215 aa).

Ser-186 (schiff-base intermediate with substrate; via pyruvic acid) is an active-site residue. At Ser-186 the chain carries Pyruvic acid (Ser); by autocatalysis.

It belongs to the phosphatidylserine decarboxylase family. PSD-A subfamily. As to quaternary structure, heterodimer of a large membrane-associated beta subunit and a small pyruvoyl-containing alpha subunit. Pyruvate serves as cofactor. Is synthesized initially as an inactive proenzyme. Formation of the active enzyme involves a self-maturation process in which the active site pyruvoyl group is generated from an internal serine residue via an autocatalytic post-translational modification. Two non-identical subunits are generated from the proenzyme in this reaction, and the pyruvate is formed at the N-terminus of the alpha chain, which is derived from the carboxyl end of the proenzyme. The post-translation cleavage follows an unusual pathway, termed non-hydrolytic serinolysis, in which the side chain hydroxyl group of the serine supplies its oxygen atom to form the C-terminus of the beta chain, while the remainder of the serine residue undergoes an oxidative deamination to produce ammonia and the pyruvoyl prosthetic group on the alpha chain.

It is found in the cell membrane. The catalysed reaction is a 1,2-diacyl-sn-glycero-3-phospho-L-serine + H(+) = a 1,2-diacyl-sn-glycero-3-phosphoethanolamine + CO2. The protein operates within phospholipid metabolism; phosphatidylethanolamine biosynthesis; phosphatidylethanolamine from CDP-diacylglycerol: step 2/2. Functionally, catalyzes the formation of phosphatidylethanolamine (PtdEtn) from phosphatidylserine (PtdSer). This Pelagibacter ubique (strain HTCC1062) protein is Phosphatidylserine decarboxylase proenzyme.